A 439-amino-acid chain; its full sequence is Xylose isomerase (439 aa).

Catalysis depends on residues histidine 101 and aspartate 104. Mg(2+) is bound by residues glutamate 232, glutamate 268, histidine 271, aspartate 296, aspartate 307, aspartate 309, and aspartate 339.

It belongs to the xylose isomerase family. Homotetramer. Requires Mg(2+) as cofactor.

It localises to the cytoplasm. It catalyses the reaction alpha-D-xylose = alpha-D-xylulofuranose. The chain is Xylose isomerase (xylA) from Lactococcus lactis subsp. lactis (strain IL1403) (Streptococcus lactis).